The sequence spans 132 residues: Small ribosomal subunit protein uS8 (132 aa).

This sequence belongs to the universal ribosomal protein uS8 family. In terms of assembly, part of the 30S ribosomal subunit. Contacts proteins S5 and S12.

Functionally, one of the primary rRNA binding proteins, it binds directly to 16S rRNA central domain where it helps coordinate assembly of the platform of the 30S subunit. In Rickettsia akari (strain Hartford), this protein is Small ribosomal subunit protein uS8.